The following is a 151-amino-acid chain: Large ribosomal subunit protein bL9 (151 aa).

This sequence belongs to the bacterial ribosomal protein bL9 family.

Functionally, binds to the 23S rRNA. In Francisella tularensis subsp. holarctica (strain LVS), this protein is Large ribosomal subunit protein bL9.